The following is an 85-amino-acid chain: UPF0335 protein BQ12070 (85 aa).

The protein belongs to the UPF0335 family.

This Bartonella quintana (strain Toulouse) (Rochalimaea quintana) protein is UPF0335 protein BQ12070.